We begin with the raw amino-acid sequence, 128 residues long: Sulfurtransferase TusD (128 aa).

Catalysis depends on Cys-78, which acts as the Cysteine persulfide intermediate.

It belongs to the DsrE/TusD family. Heterohexamer, formed by a dimer of trimers. The hexameric TusBCD complex contains 2 copies each of TusB, TusC and TusD. The TusBCD complex interacts with TusE.

The protein resides in the cytoplasm. In terms of biological role, part of a sulfur-relay system required for 2-thiolation of 5-methylaminomethyl-2-thiouridine (mnm(5)s(2)U) at tRNA wobble positions. Accepts sulfur from TusA and transfers it in turn to TusE. The protein is Sulfurtransferase TusD of Shigella flexneri serotype 5b (strain 8401).